The following is a 412-amino-acid chain: NADH-quinone oxidoreductase subunit 4 (412 aa).

This sequence belongs to the complex I 49 kDa subunit family. As to quaternary structure, NDH-1 is composed of at least 14 different subunits, Nqo1 to Nqo14. The complex has a L-shaped structure, with the hydrophobic arm (subunits Nqo7, Nqo8, Nqo10 to Nqo14) embedded in the inner membrane and the hydrophilic peripheral arm (subunits Nqo1 to Nqo6, Nqo9) protruding into the bacterial cytoplasm. The hydrophilic domain contains all the redox centers.

Its subcellular location is the cell inner membrane. The catalysed reaction is a quinone + NADH + 5 H(+)(in) = a quinol + NAD(+) + 4 H(+)(out). Functionally, NDH-1 shuttles electrons from NADH, via FMN and iron-sulfur (Fe-S) centers, to quinones in the respiratory chain. The immediate electron acceptor for the enzyme in this species is believed to be ubiquinone. Couples the redox reaction to proton translocation (for every two electrons transferred, four hydrogen ions are translocated across the cytoplasmic membrane), and thus conserves the redox energy in a proton gradient. The polypeptide is NADH-quinone oxidoreductase subunit 4 (nqo4) (Paracoccus denitrificans).